The following is a 125-amino-acid chain: Nascent polypeptide-associated complex protein (125 aa).

The NAC-A/B domain occupies 9–76; it reads PRMMKQMQKM…SKNTSKTAEK (68 aa).

This sequence belongs to the NAC-alpha family. Homodimer. Interacts with the ribosome. Binds ribosomal RNA.

In terms of biological role, contacts the emerging nascent chain on the ribosome. The chain is Nascent polypeptide-associated complex protein from Methanococcus vannielii (strain ATCC 35089 / DSM 1224 / JCM 13029 / OCM 148 / SB).